The primary structure comprises 418 residues: NADH-quinone oxidoreductase subunit H (418 aa).

9 helical membrane passes run Leu15–Ile35, Phe83–Ile103, Leu123–Leu143, Val164–Ser184, Val197–Glu217, Leu262–Gly282, Trp287–Leu307, Gly321–Ile341, and Tyr349–Leu369. Residues Ala394–Glu418 are disordered.

The protein belongs to the complex I subunit 1 family. NDH-1 is composed of 14 different subunits. Subunits NuoA, H, J, K, L, M, N constitute the membrane sector of the complex.

Its subcellular location is the cell membrane. It catalyses the reaction a quinone + NADH + 5 H(+)(in) = a quinol + NAD(+) + 4 H(+)(out). Functionally, NDH-1 shuttles electrons from NADH, via FMN and iron-sulfur (Fe-S) centers, to quinones in the respiratory chain. The immediate electron acceptor for the enzyme in this species is believed to be menaquinone. Couples the redox reaction to proton translocation (for every two electrons transferred, four hydrogen ions are translocated across the cytoplasmic membrane), and thus conserves the redox energy in a proton gradient. This subunit may bind ubiquinone. The chain is NADH-quinone oxidoreductase subunit H from Mycobacterium avium (strain 104).